A 521-amino-acid chain; its full sequence is Apolipoprotein N-acyltransferase (521 aa).

Helical transmembrane passes span 24 to 44, 71 to 91, 128 to 148, 151 to 171, and 182 to 202; these read IKETGYSILGFVAYVPLFIAL, WLGFFHAFGWITFIGVIIGYI, IGFLAYPWGLAAFTVNNFNNL, IADIFGVFFVSFAVYFLNSGI, and NLLNIAFPTLLITASFTYGMI. Residues 218 to 472 form the CN hydrolase domain; the sequence is LNIAAIQLNT…KGYLLSTVKL (255 aa). Glu-263 functions as the Proton acceptor in the catalytic mechanism. Residue Lys-331 is part of the active site. Catalysis depends on Cys-383, which acts as the Nucleophile.

Belongs to the CN hydrolase family. Apolipoprotein N-acyltransferase subfamily.

It localises to the cell inner membrane. The enzyme catalyses N-terminal S-1,2-diacyl-sn-glyceryl-L-cysteinyl-[lipoprotein] + a glycerophospholipid = N-acyl-S-1,2-diacyl-sn-glyceryl-L-cysteinyl-[lipoprotein] + a 2-acyl-sn-glycero-3-phospholipid + H(+). The protein operates within protein modification; lipoprotein biosynthesis (N-acyl transfer). In terms of biological role, catalyzes the phospholipid dependent N-acylation of the N-terminal cysteine of apolipoprotein, the last step in lipoprotein maturation. This chain is Apolipoprotein N-acyltransferase, found in Borreliella burgdorferi (strain ATCC 35210 / DSM 4680 / CIP 102532 / B31) (Borrelia burgdorferi).